The following is a 458-amino-acid chain: Tol-Pal system protein TolB (458 aa).

The first 23 residues, 1 to 23 (MSSVIRKWALTALMAVSSTALFA), serve as a signal peptide directing secretion.

It belongs to the TolB family. The Tol-Pal system is composed of five core proteins: the inner membrane proteins TolA, TolQ and TolR, the periplasmic protein TolB and the outer membrane protein Pal. They form a network linking the inner and outer membranes and the peptidoglycan layer.

The protein localises to the periplasm. Functionally, part of the Tol-Pal system, which plays a role in outer membrane invagination during cell division and is important for maintaining outer membrane integrity. The polypeptide is Tol-Pal system protein TolB (Zymomonas mobilis subsp. mobilis (strain ATCC 31821 / ZM4 / CP4)).